Reading from the N-terminus, the 328-residue chain is Reticulocalbin-3 (328 aa).

The first 20 residues, 1 to 20 (MMWRPSVLLLLLLLRHGAQG), serve as a signal peptide directing secretion. Positions 19 to 49 (QGKPSPDAGPHGQGRVHQAAPLSDAPHDDAH) are disordered. EF-hand domains follow at residues 75-112 (ESQA…TQQR), 113-148 (HIRD…HYAP), 163-198 (KMLA…EEFP), 200-235 (MRDI…AEPG), 241-276 (WVQT…PAQD), and 277-312 (QPLV…FVGS). The Ca(2+) site is built by D92, D94, W96, E101, D126, D128, D130, R132, and E137. A glycan (N-linked (GlcNAc...) asparagine) is linked at N140. Ca(2+)-binding residues include D176, D178, D180, M182, E187, D213, N215, D217, Y219, E224, D254, N256, D258, H260, E265, D290, D292, D294, R296, and E301. Residues 325–328 (HDEL) carry the Prevents secretion from ER motif.

This sequence belongs to the CREC family. In terms of assembly, interacts with PCSK6 (immature form including the propeptide); probably involved in the maturation and the secretion of PCSK6. Degraded by PCSK6 and other endoproteases including FURIN and PCSK5. Post-translationally, N-glycosylated. In terms of tissue distribution, widely expressed.

The protein localises to the endoplasmic reticulum lumen. Its function is as follows. Probable molecular chaperone assisting protein biosynthesis and transport in the endoplasmic reticulum. Required for the proper biosynthesis and transport of pulmonary surfactant-associated protein A/SP-A, pulmonary surfactant-associated protein D/SP-D and the lipid transporter ABCA3. By regulating both the proper expression and the degradation through the endoplasmic reticulum-associated protein degradation pathway of these proteins plays a crucial role in pulmonary surfactant homeostasis. Has an anti-fibrotic activity by negatively regulating the secretion of type I and type III collagens. This calcium-binding protein also transiently associates with immature PCSK6 and regulates its secretion. The chain is Reticulocalbin-3 from Homo sapiens (Human).